A 451-amino-acid polypeptide reads, in one-letter code: UPF0210 protein lmo0534 (451 aa).

The protein belongs to the UPF0210 family. As to quaternary structure, homodimer.

The protein is UPF0210 protein lmo0534 of Listeria monocytogenes serovar 1/2a (strain ATCC BAA-679 / EGD-e).